We begin with the raw amino-acid sequence, 121 residues long: Large ribosomal subunit protein bL19 (121 aa).

Belongs to the bacterial ribosomal protein bL19 family.

Functionally, this protein is located at the 30S-50S ribosomal subunit interface and may play a role in the structure and function of the aminoacyl-tRNA binding site. The polypeptide is Large ribosomal subunit protein bL19 (Borrelia garinii subsp. bavariensis (strain ATCC BAA-2496 / DSM 23469 / PBi) (Borreliella bavariensis)).